We begin with the raw amino-acid sequence, 433 residues long: Pectinesterase B (433 aa).

The first 21 residues, 1-21, serve as a signal peptide directing secretion; that stretch reads MSLTHYSGLAAAVSMSLILTA. A lipid anchor (N-palmitoyl cysteine) is attached at cysteine 22. A lipid anchor (S-diacylglycerol cysteine) is attached at cysteine 22. The Periplasmic portion of the chain corresponds to 22 to 433; it reads CGGQTPNSAR…EYNTQVLLHE (412 aa). 2 residues coordinate substrate: threonine 202 and glutamine 236. Aspartate 259 functions as the Proton donor in the catalytic mechanism. Residue aspartate 292 is the Nucleophile of the active site. The substrate site is built by arginine 356 and tryptophan 358.

The protein belongs to the pectinesterase family.

The protein resides in the cell outer membrane. It catalyses the reaction [(1-&gt;4)-alpha-D-galacturonosyl methyl ester](n) + n H2O = [(1-&gt;4)-alpha-D-galacturonosyl](n) + n methanol + n H(+). The protein operates within glycan metabolism; pectin degradation; 2-dehydro-3-deoxy-D-gluconate from pectin: step 1/5. Probably involved in the degradation of methylated oligogalacturonides present in the periplasm. More active on methylated oligogalacturides than on pectin. The sequence is that of Pectinesterase B from Dickeya dadantii (strain 3937) (Erwinia chrysanthemi (strain 3937)).